A 384-amino-acid chain; its full sequence is Outer membrane protein assembly factor BamB (384 aa).

The N-terminal stretch at 1-21 (MKLTLKRKFIAVLALTSLLGA) is a signal peptide. C22 is lipidated: N-palmitoyl cysteine. C22 carries the S-diacylglycerol cysteine lipid modification.

The protein belongs to the BamB family. As to quaternary structure, part of the Bam complex.

The protein resides in the cell outer membrane. In terms of biological role, part of the outer membrane protein assembly complex, which is involved in assembly and insertion of beta-barrel proteins into the outer membrane. The chain is Outer membrane protein assembly factor BamB from Taylorella asinigenitalis (strain MCE3).